A 2177-amino-acid polypeptide reads, in one-letter code: Brefeldin A-inhibited guanine nucleotide-exchange protein 3 (2177 aa).

Over residues T282 to S295 the composition is skewed to low complexity. The tract at residues T282–H301 is disordered. S471 is subject to Phosphoserine. Positions T511–T524 are enriched in polar residues. Disordered regions lie at residues T511–P542, A617–S636, and D1031–A1076. Positions R583–R796 constitute an SEC7 domain. Residues A618–V627 show a composition bias toward basic and acidic residues. S632 and S636 each carry phosphoserine. Over residues G1032–T1047 the composition is skewed to polar residues. S1049 is subject to Phosphoserine. The helical transmembrane segment at G1492–L1512 threads the bilayer. Disordered stretches follow at residues S1848 to K1877, E1946 to E2004, and K2033 to L2064. A compositionally biased stretch (basic and acidic residues) spans T1960–G1974. S1991 is modified (phosphoserine). 2 stretches are compositionally biased toward basic and acidic residues: residues K1993–E2004 and K2043–E2052. 5 positions are modified to phosphoserine: S2079, S2081, S2095, S2101, and S2103. The tract at residues A2082–S2103 is disordered.

Interacts with PHB2. Expressed in breast cancer cell lines. Not expressed in normal tissues such as duct, mammary gland, lung, heart, liver, kidnay, bone marrow.

The protein localises to the cytoplasm. It localises to the cytoplasmic vesicle. It is found in the secretory vesicle. The protein resides in the secretory vesicle membrane. Participates in the regulation of systemic glucose homeostasis, where it negatively regulates insulin granule biogenesis in pancreatic islet beta cells. Also regulates glucagon granule production in pancreatic alpha cells. Inhibits nuclear translocation of the transcriptional coregulator PHB2 and may enhance estrogen receptor alpha (ESR1) transcriptional activity in breast cancer cells. This is Brefeldin A-inhibited guanine nucleotide-exchange protein 3 from Homo sapiens (Human).